The primary structure comprises 77 residues: Acyl carrier protein (77 aa).

A Carrier domain is found at 1-76 (MSIEERVKKI…SAIDYVAKAN (76 aa)). O-(pantetheine 4'-phosphoryl)serine is present on Ser36.

This sequence belongs to the acyl carrier protein (ACP) family. Post-translationally, 4'-phosphopantetheine is transferred from CoA to a specific serine of apo-ACP by AcpS. This modification is essential for activity because fatty acids are bound in thioester linkage to the sulfhydryl of the prosthetic group.

It is found in the cytoplasm. It participates in lipid metabolism; fatty acid biosynthesis. Functionally, carrier of the growing fatty acid chain in fatty acid biosynthesis. This chain is Acyl carrier protein, found in Haemophilus ducreyi (strain 35000HP / ATCC 700724).